A 429-amino-acid chain; its full sequence is Histidine--tRNA ligase (429 aa).

It belongs to the class-II aminoacyl-tRNA synthetase family. As to quaternary structure, homodimer.

The protein resides in the cytoplasm. The enzyme catalyses tRNA(His) + L-histidine + ATP = L-histidyl-tRNA(His) + AMP + diphosphate + H(+). This Pelodictyon phaeoclathratiforme (strain DSM 5477 / BU-1) protein is Histidine--tRNA ligase.